The primary structure comprises 492 residues: Probable cobyric acid synthase (492 aa).

Residues 252 to 444 (PIEVNIVKFS…FHGILENFEF (193 aa)) enclose the GATase cobBQ-type domain. Residue Cys330 is the Nucleophile of the active site. His436 is a catalytic residue.

This sequence belongs to the CobB/CobQ family. CobQ subfamily.

Its pathway is cofactor biosynthesis; adenosylcobalamin biosynthesis. Its function is as follows. Catalyzes amidations at positions B, D, E, and G on adenosylcobyrinic A,C-diamide. NH(2) groups are provided by glutamine, and one molecule of ATP is hydrogenolyzed for each amidation. The protein is Probable cobyric acid synthase of Methanococcus maripaludis (strain C5 / ATCC BAA-1333).